A 547-amino-acid polypeptide reads, in one-letter code: Chaperonin GroEL (547 aa).

Residues 30 to 33, Lys51, 87 to 91, Gly415, and Asp495 contribute to the ATP site; these read TLGP and DGTTT.

The protein belongs to the chaperonin (HSP60) family. In terms of assembly, forms a cylinder of 14 subunits composed of two heptameric rings stacked back-to-back. Interacts with the co-chaperonin GroES.

It localises to the cytoplasm. The enzyme catalyses ATP + H2O + a folded polypeptide = ADP + phosphate + an unfolded polypeptide.. Functionally, together with its co-chaperonin GroES, plays an essential role in assisting protein folding. The GroEL-GroES system forms a nano-cage that allows encapsulation of the non-native substrate proteins and provides a physical environment optimized to promote and accelerate protein folding. The protein is Chaperonin GroEL of Aggregatibacter actinomycetemcomitans (Actinobacillus actinomycetemcomitans).